The primary structure comprises 470 residues: PTS system trehalose-specific EIIBC component (470 aa).

The region spanning 1-88 is the PTS EIIB type-1 domain; it reads MGELNKSARQ…VKETGIGEST (88 aa). Cys27 functions as the Phosphocysteine intermediate; for EIIB activity in the catalytic mechanism. Cys27 is subject to Phosphocysteine; by EIIA. The PTS EIIC type-1 domain occupies 108–470; it reads KTLADIFIPI…TYAYARFKHK (363 aa). 10 consecutive transmembrane segments (helical) span residues 110 to 130, 160 to 180, 183 to 203, 234 to 254, 263 to 283, 301 to 321, 326 to 346, 347 to 367, 403 to 423, and 443 to 463; these read LADI…LMGI, INLI…WSAV, FGGN…PDLL, GQVL…VFLT, LLVV…IIIG, FGSF…ALVI, HTFL…TFLW, PMLA…MFIV, FIIA…QGVL, and WGAF…GTYA.

The protein localises to the cell membrane. The catalysed reaction is alpha,alpha-trehalose(out) + N(pros)-phospho-L-histidyl-[protein] = alpha,alpha-trehalose 6-phosphate(in) + L-histidyl-[protein]. Functionally, the phosphoenolpyruvate-dependent sugar phosphotransferase system (sugar PTS), a major carbohydrate active transport system, catalyzes the phosphorylation of incoming sugar substrates concomitantly with their translocation across the cell membrane. This system is involved in trehalose transport. This Bacillus subtilis (strain 168) protein is PTS system trehalose-specific EIIBC component (treP).